The chain runs to 400 residues: Apolipoprotein N-acyltransferase (400 aa).

5 consecutive transmembrane segments (helical) span residues alanine 16 to valine 36, phenylalanine 42 to tyrosine 62, phenylalanine 67 to glycine 87, phenylalanine 97 to glutamate 117, and serine 123 to phenylalanine 143. One can recognise a CN hydrolase domain in the interval alanine 181–arginine 400. Catalysis depends on glutamate 222, which acts as the Proton acceptor. The active site involves lysine 283. Residue cysteine 332 is the Nucleophile of the active site. Residues tyrosine 377–valine 397 traverse the membrane as a helical segment.

It belongs to the CN hydrolase family. Apolipoprotein N-acyltransferase subfamily.

Its subcellular location is the cell inner membrane. It carries out the reaction N-terminal S-1,2-diacyl-sn-glyceryl-L-cysteinyl-[lipoprotein] + a glycerophospholipid = N-acyl-S-1,2-diacyl-sn-glyceryl-L-cysteinyl-[lipoprotein] + a 2-acyl-sn-glycero-3-phospholipid + H(+). It functions in the pathway protein modification; lipoprotein biosynthesis (N-acyl transfer). Functionally, catalyzes the phospholipid dependent N-acylation of the N-terminal cysteine of apolipoprotein, the last step in lipoprotein maturation. In Helicobacter hepaticus (strain ATCC 51449 / 3B1), this protein is Apolipoprotein N-acyltransferase.